Reading from the N-terminus, the 283-residue chain is 1D-myo-inositol 2-acetamido-2-deoxy-alpha-D-glucopyranoside deacetylase (283 aa).

Residues His-7, Asp-10, and His-148 each coordinate Zn(2+).

The protein belongs to the MshB deacetylase family. Requires Zn(2+) as cofactor.

It catalyses the reaction 1D-myo-inositol 2-acetamido-2-deoxy-alpha-D-glucopyranoside + H2O = 1D-myo-inositol 2-amino-2-deoxy-alpha-D-glucopyranoside + acetate. In terms of biological role, catalyzes the deacetylation of 1D-myo-inositol 2-acetamido-2-deoxy-alpha-D-glucopyranoside (GlcNAc-Ins) in the mycothiol biosynthesis pathway. The sequence is that of 1D-myo-inositol 2-acetamido-2-deoxy-alpha-D-glucopyranoside deacetylase from Gordonia bronchialis (strain ATCC 25592 / DSM 43247 / BCRC 13721 / JCM 3198 / KCTC 3076 / NBRC 16047 / NCTC 10667) (Rhodococcus bronchialis).